Consider the following 230-residue polypeptide: MRLPPLIAGTLVRRYKRFLADVILEDGSPVTVHCPNSGSMKGCASPGSRVLLSRSANPGRAYPLTWELVESDGCWAGINTSLPNRLVREAIENGTVVELRGYDSIRPEVAYGQRSRIDLLLEGPAGRCYVEVKNVTLVEGERALFPDAVTVRGQKHLNELMRVVREGDRGVIFFTVQRGDAESVSPADAIDPEYGRLLRLALDSGVEALAYRAVVSPEEIRLKERLPVIL.

This sequence belongs to the SfsA family.

The protein is Sugar fermentation stimulation protein homolog of Pelobacter propionicus (strain DSM 2379 / NBRC 103807 / OttBd1).